Here is a 293-residue protein sequence, read N- to C-terminus: Caspase-6 (293 aa).

Residues M1 to T20 form a disordered region. A propeptide spanning residues M1 to D23 is cleaved from the precursor. Residues K42–R44 are tri-arginine exosite. S79 bears the Phosphoserine mark. The active site involves H121. The interval N125–L142 is 130's region. C163 is a catalytic residue. A propeptide spanning residues H180–D193 is cleaved from the precursor. S257 is modified (phosphoserine). Residues C264 and C277 are each lipidated (S-palmitoyl cysteine).

Belongs to the peptidase C14A family. In terms of assembly, heterotetramer that consists of two anti-parallel arranged heterodimers, each one formed by a 18 kDa (p18) and a 11 kDa (p11) subunits. Interacts with BIRC6/bruce. Interacts with RIPK3. As to quaternary structure, heterotetramer that consists of two anti-parallel arranged heterodimers, each one formed by a 18 kDa (Caspase-6 subunit p18) and a 11 kDa (Caspase-6 subunit p11) subunit. In terms of processing, phosphorylated by NUAK1; phosphorylation inhibits self-activation. Phosphorylation at Ser-257 by AMP-activated protein kinase (PRKAA1 or PRKAA2) inhibits autocleavage, preventing caspase activation, thereby preventing hepatocyte apoptosis. Post-translationally, palmitoylation by ZDHHC17 blocks dimerization and subsequent activation, leading to inhibit the cysteine protease activity. Can be cleaved and activated by different caspases, depending on the context. Cleaved and activated by caspase-8 (CASP8) and subsequently by caspase-3 (CASP3). Can also undergo autoactivation by mediating autocleavage at Asp-179 and Asp-193, while it is not able to cleave its N-terminal disordered prodomain. Cleaved and activated by CASP1, possibly in the context of inflammation.

It localises to the cytoplasm. Its subcellular location is the nucleus. The enzyme catalyses Strict requirement for Asp at position P1 and has a preferred cleavage sequence of Val-Glu-His-Asp-|-.. With respect to regulation, during activation, the N-terminal disordered prodomain is removed by cleavage. Concomitantly, double cleavage gives rise to a large 18-kDa and a small 11-kDa subunit. The two large and two small subunits then assemble to form the active CASP6 complex. Can be cleaved and activated by different caspases, depending on the context. Cleaved and activated by caspase-8 (CASP8) and subsequently by caspase-3 (CASP3). Can also undergo autoactivation by mediating autocleavage at Asp-179 and Asp-193, while it is not able to cleave its N-terminal disordered prodomain. Intramolecular cleavage at Asp-193 is a prerequisite for CASP6 self-activation. Cleaved and activated by CASP1 in neurons, possibly in the context of inflammation. Phosphorylation at Ser-257 inhibits autocleavage, preventing caspase activation. In terms of biological role, cysteine protease that plays essential roles in programmed cell death, axonal degeneration, development and innate immunity. Acts as a non-canonical executioner caspase during apoptosis: localizes in the nucleus and cleaves the nuclear structural protein NUMA1 and lamin A/LMNA thereby inducing nuclear shrinkage and fragmentation. Lamin-A/LMNA cleavage is required for chromatin condensation and nuclear disassembly during apoptotic execution. Acts as a regulator of liver damage by promoting hepatocyte apoptosis: in absence of phosphorylation by AMP-activated protein kinase (AMPK), catalyzes cleavage of BID, leading to cytochrome c release, thereby participating in nonalcoholic steatohepatitis. Cleaves PARK7/DJ-1 in cells undergoing apoptosis. Involved in intrinsic apoptosis by mediating cleavage of RIPK1. Furthermore, cleaves many transcription factors such as NF-kappa-B and cAMP response element-binding protein/CREBBP. Cleaves phospholipid scramblase proteins XKR4 and XKR9. In addition to apoptosis, involved in different forms of programmed cell death. Plays an essential role in defense against viruses by acting as a central mediator of the ZBP1-mediated pyroptosis, apoptosis, and necroptosis (PANoptosis), independently of its cysteine protease activity. PANoptosis is a unique inflammatory programmed cell death, which provides a molecular scaffold that allows the interactions and activation of machinery required for inflammasome/pyroptosis, apoptosis and necroptosis. Mechanistically, interacts with RIPK3 and enhances the interaction between RIPK3 and ZBP1, leading to ZBP1-mediated inflammasome activation and cell death. Plays an essential role in axon degeneration during axon pruning which is the remodeling of axons during neurogenesis but not apoptosis. Regulates B-cell programs both during early development and after antigen stimulation. This chain is Caspase-6, found in Bos taurus (Bovine).